Here is a 159-residue protein sequence, read N- to C-terminus: Endoribonuclease YbeY (159 aa).

Zn(2+) is bound by residues His114, His118, and His124.

The protein belongs to the endoribonuclease YbeY family. Requires Zn(2+) as cofactor.

It is found in the cytoplasm. In terms of biological role, single strand-specific metallo-endoribonuclease involved in late-stage 70S ribosome quality control and in maturation of the 3' terminus of the 16S rRNA. This is Endoribonuclease YbeY from Pectobacterium atrosepticum (strain SCRI 1043 / ATCC BAA-672) (Erwinia carotovora subsp. atroseptica).